The primary structure comprises 502 residues: Protein DETOXIFICATION 55 (502 aa).

12 helical membrane passes run 30 to 50, 61 to 81, 112 to 132, 145 to 165, 185 to 205, 207 to 227, 261 to 283, 298 to 318, 344 to 364, 378 to 398, 419 to 439, and 447 to 467; these read IWDI…KNMT, LELA…YSVL, IFLL…LAPL, VASL…FLHP, VSVL…SLGV, GVAV…LCYI, VWST…WWWY, VALA…TIPT, ATVA…GTTV, VVLE…LANC, INFY…AFVW, and CYGL…VVYN.

This sequence belongs to the multi antimicrobial extrusion (MATE) (TC 2.A.66.1) family.

The protein localises to the membrane. The polypeptide is Protein DETOXIFICATION 55 (Arabidopsis thaliana (Mouse-ear cress)).